The following is a 70-amino-acid chain: Adenylate kinase (70 aa).

10 to 15 contributes to the ATP binding site; it reads GAGKGT. Residues 30-59 form an NMP region; that stretch reads STGDLFRANISKQTELGKLAKSYMDKGELV. Residues Thr31, Arg36, and 57-59 contribute to the AMP site; that span reads ELV.

The protein belongs to the adenylate kinase family. In terms of assembly, monomer.

The protein localises to the cytoplasm. The enzyme catalyses AMP + ATP = 2 ADP. Its pathway is purine metabolism; AMP biosynthesis via salvage pathway; AMP from ADP: step 1/1. Catalyzes the reversible transfer of the terminal phosphate group between ATP and AMP. Plays an important role in cellular energy homeostasis and in adenine nucleotide metabolism. In Streptomyces scabiei, this protein is Adenylate kinase (adk).